We begin with the raw amino-acid sequence, 243 residues long: Cytochrome c oxidase subunit 2 (243 aa).

Over 1 to 34 the chain is Mitochondrial intermembrane; that stretch reads MNNIIHNDAPTPWGIYFQDGASPVYDGIVELHDQ. A helical transmembrane segment spans residues 35–55; the sequence is VLFYLLIVLVGVSWILFSTIL. Residues 56–74 are Mitochondrial matrix-facing; that stretch reads RFRGSGIVHKYHNHSTTIE. A helical transmembrane segment spans residues 75–97; the sequence is FVWTVSPALLLIAIAFPSFKLLY. Residues 98 to 243 are Mitochondrial intermembrane-facing; it reads LMDEVIDPSI…EKFLSWLDNQ (146 aa). Residues His178, Cys213, Glu215, Cys217, His221, and Met224 each contribute to the Cu cation site. Glu215 lines the Mg(2+) pocket.

The protein belongs to the cytochrome c oxidase subunit 2 family. Component of the cytochrome c oxidase (complex IV, CIV), a multisubunit enzyme composed of a catalytic core of 3 subunits and several supernumerary subunits. The complex exists as a monomer or a dimer and forms supercomplexes (SCs) in the inner mitochondrial membrane with ubiquinol-cytochrome c oxidoreductase (cytochrome b-c1 complex, complex III, CIII). It depends on Cu cation as a cofactor.

It localises to the mitochondrion inner membrane. It carries out the reaction 4 Fe(II)-[cytochrome c] + O2 + 8 H(+)(in) = 4 Fe(III)-[cytochrome c] + 2 H2O + 4 H(+)(out). Functionally, component of the cytochrome c oxidase, the last enzyme in the mitochondrial electron transport chain which drives oxidative phosphorylation. The respiratory chain contains 3 multisubunit complexes succinate dehydrogenase (complex II, CII), ubiquinol-cytochrome c oxidoreductase (cytochrome b-c1 complex, complex III, CIII) and cytochrome c oxidase (complex IV, CIV), that cooperate to transfer electrons derived from NADH and succinate to molecular oxygen, creating an electrochemical gradient over the inner membrane that drives transmembrane transport and the ATP synthase. Cytochrome c oxidase is the component of the respiratory chain that catalyzes the reduction of oxygen to water. Electrons originating from reduced cytochrome c in the intermembrane space (IMS) are transferred via the dinuclear copper A center (CU(A)) of subunit 2 and heme A of subunit 1 to the active site in subunit 1, a binuclear center (BNC) formed by heme A3 and copper B (CU(B)). The BNC reduces molecular oxygen to 2 water molecules using 4 electrons from cytochrome c in the IMS and 4 protons from the mitochondrial matrix. The chain is Cytochrome c oxidase subunit 2 from Pneumocystis carinii.